The following is a 407-amino-acid chain: Protein ATC1/LIC4 (407 aa).

It localises to the cytoplasm. The protein localises to the nucleus. Functionally, involved in cation homeostasis and in the regulation of the cation stress signaling cascades. The sequence is that of Protein ATC1/LIC4 (ATC1) from Eremothecium gossypii (strain ATCC 10895 / CBS 109.51 / FGSC 9923 / NRRL Y-1056) (Yeast).